The chain runs to 294 residues: tRNA dimethylallyltransferase (294 aa).

10–17 (GPTAVGKT) contacts ATP. Position 12–17 (12–17 (TAVGKT)) interacts with substrate. The tract at residues 35 to 38 (DSQQ) is interaction with substrate tRNA.

This sequence belongs to the IPP transferase family. In terms of assembly, monomer. It depends on Mg(2+) as a cofactor.

It catalyses the reaction adenosine(37) in tRNA + dimethylallyl diphosphate = N(6)-dimethylallyladenosine(37) in tRNA + diphosphate. Its function is as follows. Catalyzes the transfer of a dimethylallyl group onto the adenine at position 37 in tRNAs that read codons beginning with uridine, leading to the formation of N6-(dimethylallyl)adenosine (i(6)A). This is tRNA dimethylallyltransferase from Streptococcus pneumoniae (strain Taiwan19F-14).